We begin with the raw amino-acid sequence, 454 residues long: Mogroside I-E synthase (454 aa).

Catalysis depends on His18, which acts as the Proton acceptor. His18 contributes to the an anthocyanidin binding site. The Charge relay role is filled by Asp111. An anthocyanidin is bound at residue His144. Cys259 and Cys331 are disulfide-bonded. Residues Ser278, Cys331, Gln333, Trp351, Asn352, Ser353, and Glu356 each coordinate UDP-alpha-D-glucose. Position 371 (Ala371) interacts with an anthocyanidin. The UDP-alpha-D-glucose site is built by Asp372 and Gln373.

Belongs to the UDP-glycosyltransferase family. As to expression, highly expressed in young fruits 15 days after anthesis (15-DAA).

The catalysed reaction is mogrol + UDP-alpha-D-glucose = mogroside IE + UDP + H(+). It functions in the pathway secondary metabolite biosynthesis; terpenoid biosynthesis. Activity is increased by Mg(2+). In terms of biological role, UDP-glycosyltransferase involved in the biosynthesis of cucurbitacin and mogroside tetracyclic triterpene natural products (e.g. siamenoside I and mogrosides IV, V and VI). Cucurbitacins have cytotoxic properties and exhibit deterrent taste as a defense barrier against herbivores. Mogrosides are nonsugar highly oxygenated compounds used as high-intensity zero-calorie sweeteners; they also possess pharmacological properties such as regulating immunity, lowering blood sugar and lipid levels, protecting the liver, and acting as antioxidants and antitumor agents. Catalyzes the transfer of a glucose moiety to the C-3 hydroxyl of mogrol to form mogroside I-E. Besides mogrol, UGT74AC1 also shows activity in vitro with quercetin and naringenin as substrate. This Siraitia grosvenorii (Monk's fruit) protein is Mogroside I-E synthase.